Here is a 272-residue protein sequence, read N- to C-terminus: Ribosome maturation factor RimP (272 aa).

The segment at 209-272 is disordered; the sequence is QNLGILPPPP…RGDIDPPEGD (64 aa). Positions 250–266 are enriched in basic and acidic residues; the sequence is NTKEHRLAAERLRRGDI.

This sequence belongs to the RimP family.

The protein localises to the cytoplasm. In terms of biological role, required for maturation of 30S ribosomal subunits. In Rhodopseudomonas palustris (strain BisA53), this protein is Ribosome maturation factor RimP.